A 137-amino-acid chain; its full sequence is MPTINQLVTKGRKRKASKTKSPALNQSYNSLHKKYKKLSAPFKRGVCTRVATMTPKKPNSALRKYARVKLSNGMEVTAYIPGEGHNLQEHSVVLIKGASVKDLPGVRYSIIRGTQDAAGVNKRNQARSRYGAKKAKK.

The tract at residues Met1 to Gln26 is disordered.

Belongs to the universal ribosomal protein uS12 family. Part of the 30S ribosomal subunit. Contacts proteins S8 and S17. May interact with IF1 in the 30S initiation complex.

Its function is as follows. With S4 and S5 plays an important role in translational accuracy. Interacts with and stabilizes bases of the 16S rRNA that are involved in tRNA selection in the A site and with the mRNA backbone. Located at the interface of the 30S and 50S subunits, it traverses the body of the 30S subunit contacting proteins on the other side and probably holding the rRNA structure together. The combined cluster of proteins S8, S12 and S17 appears to hold together the shoulder and platform of the 30S subunit. The polypeptide is Small ribosomal subunit protein uS12 (Mycoplasmopsis pulmonis (strain UAB CTIP) (Mycoplasma pulmonis)).